The primary structure comprises 208 residues: FMN-dependent NADH:quinone oxidoreductase 4 (208 aa).

The protein belongs to the azoreductase type 1 family. As to quaternary structure, homodimer. FMN is required as a cofactor.

The enzyme catalyses 2 a quinone + NADH + H(+) = 2 a 1,4-benzosemiquinone + NAD(+). It carries out the reaction N,N-dimethyl-1,4-phenylenediamine + anthranilate + 2 NAD(+) = 2-(4-dimethylaminophenyl)diazenylbenzoate + 2 NADH + 2 H(+). Quinone reductase that provides resistance to thiol-specific stress caused by electrophilic quinones. Its function is as follows. Also exhibits azoreductase activity. Catalyzes the reductive cleavage of the azo bond in aromatic azo compounds to the corresponding amines. This Bacillus anthracis protein is FMN-dependent NADH:quinone oxidoreductase 4.